The sequence spans 529 residues: Fibroblast growth factor receptor-like 1 (529 aa).

A signal peptide spans 1-20 (MTRSPALLLLLLGALPSAEA). Residues 21–374 (ARGPPRMADK…SSSSTSLPWP (354 aa)) are Extracellular-facing. 3 consecutive Ig-like C2-type domains span residues 25–111 (PRMA…YTLI), 143–233 (PRFT…YKVD), and 242–350 (PVLT…AFLT). Cys-47 and Cys-95 form a disulfide bridge. Asn-107 carries an N-linked (GlcNAc...) asparagine glycan. The tract at residues 116-151 (ISPGKESPGPGGSSGGQEDPASQQWARPRFTQPSKM) is disordered. Cys-168 and Cys-217 are joined by a disulfide. 3 N-linked (GlcNAc...) asparagine glycosylation sites follow: Asn-227, Asn-251, and Asn-289. A disulfide bridge links Cys-264 with Cys-334. The chain crosses the membrane as a helical span at residues 375–395 (VVIGIPAGAVFILGTVLLWLC). At 396-529 (QTKKKPCAPA…RIENNGGRVS (134 aa)) the chain is on the cytoplasmic side. Positions 405 to 427 (ASTLPVPGHRPPGTSRERSGDKD) are disordered.

In terms of assembly, interacts with FGF2 with a low affinity. Highly expressed in the kidney, brain and lung. Weakly expressed in the muscle, thymus, lymph node, stomach, intestine, colon and liver. Expressed in fetal cartilaginous structures like the nasal cartilage, the ribs and the sternum as well as in the cartilaginous rudiments of developing bones such as the vertebrae and the pelvic bone. High expression is found in the muscles of the tongue and the diaphragm.

It localises to the cell membrane. Functionally, has a negative effect on cell proliferation. The sequence is that of Fibroblast growth factor receptor-like 1 (Fgfrl1) from Mus musculus (Mouse).